The sequence spans 303 residues: Acetaldehyde dehydrogenase (303 aa).

13–16 (SGNI) lines the NAD(+) pocket. The active-site Acyl-thioester intermediate is the cysteine 128. NAD(+) is bound by residues 159–167 (SAGPGTRQN) and asparagine 278.

This sequence belongs to the acetaldehyde dehydrogenase family.

It carries out the reaction acetaldehyde + NAD(+) + CoA = acetyl-CoA + NADH + H(+). The sequence is that of Acetaldehyde dehydrogenase from Chloroflexus aggregans (strain MD-66 / DSM 9485).